We begin with the raw amino-acid sequence, 98 residues long: uncharacterized protein (98 aa).

This is an uncharacterized protein from Methanocaldococcus jannaschii (strain ATCC 43067 / DSM 2661 / JAL-1 / JCM 10045 / NBRC 100440) (Methanococcus jannaschii).